A 534-amino-acid polypeptide reads, in one-letter code: Peptide chain release factor 3 (534 aa).

The tr-type G domain maps to 9–278; that stretch reads ARRRTFAIIS…FFVEHAPSPQ (270 aa). Residues 18–25, 86–90, and 140–143 each bind GTP; these read SHPDAGKT, DTPGH, and NKLD.

It belongs to the TRAFAC class translation factor GTPase superfamily. Classic translation factor GTPase family. PrfC subfamily.

Its subcellular location is the cytoplasm. In terms of biological role, increases the formation of ribosomal termination complexes and stimulates activities of RF-1 and RF-2. It binds guanine nucleotides and has strong preference for UGA stop codons. It may interact directly with the ribosome. The stimulation of RF-1 and RF-2 is significantly reduced by GTP and GDP, but not by GMP. The sequence is that of Peptide chain release factor 3 from Xylella fastidiosa (strain M12).